We begin with the raw amino-acid sequence, 710 residues long: Iron-sulfur clusters transporter ATM1, mitochondrial (710 aa).

The transit peptide at 1 to 38 directs the protein to the mitochondrion; that stretch reads MWLSLPRSGYGSVATLTSKRVLACLTPLRQFSTSPAVS. Polar residues predominate over residues 35–52; that stretch reads PAVSNANHKNVDNINKSP. Residues 35–83 are disordered; the sequence is PAVSNANHKNVDNINKSPANDAANNAVEKGDKPTTSPEKLATKAEKSSA. Over 39 to 129 the chain is Mitochondrial matrix; sequence NANHKNVDNI…PKGKTSVKFR (91 aa). The chain crosses the membrane as a helical span at residues 130–151; that stretch reads VLVAVALLVGAKLLNVQVPFFF. Positions 130 to 419 constitute an ABC transmembrane type-1 domain; sequence VLVAVALLVG…LGSVYRDLRQ (290 aa). Topologically, residues 152 to 173 are mitochondrial intermembrane; it reads KEIIDDMNIEWNSATALGVGIT. The helical transmembrane segment at 174–197 threads the bilayer; the sequence is ALIFSYGAARFGAVLFGELRNAIF. The Mitochondrial matrix portion of the chain corresponds to 198–246; that stretch reads ASVAQKAIKEVATNVFRHLLKLDMAFHLSRQTGGITRAIDRGTKGISFV. The helical transmembrane segment at 247–270 threads the bilayer; that stretch reads LSSMVFHIIPIALEISLVCGILSY. Residue Asn-271 is a topological domain, mitochondrial intermembrane. The chain crosses the membrane as a helical span at residues 272–292; the sequence is FGWKYALVTGATMVSYAIFTI. At 293–358 the chain is on the mitochondrial matrix side; it reads TTTSWRTKFR…ASIKIATSLA (66 aa). Residues 298 to 302 and 361 to 364 each bind glutathione; these read RTKFR and NSGQ. Residues 359 to 377 traverse the membrane as a helical segment; it reads FLNSGQNLIFSSALTAMMY. Residues 378 to 392 are Mitochondrial intermembrane-facing; sequence MTCCGVADGSLTVGD. The helical transmembrane segment at 393-414 threads the bilayer; the sequence is LVLVNQLVFQLSVPLNFLGSVY. A glutathione-binding site is contributed by Gly-411. Topologically, residues 415–710 are mitochondrial matrix; it reads RDLRQSLLDM…AEEKAAKKDV (296 aa). An ABC transporter domain is found at 453–687; it reads IRFENVTYGY…DGLYKSMWDA (235 aa). Residues Tyr-462 and 486-497 each bind ATP; that span reads GPSGSGKSTILK.

It belongs to the ABC transporter superfamily. ABCB family. Heavy Metal importer (TC 3.A.1.210) subfamily. In terms of assembly, homodimer.

It is found in the mitochondrion inner membrane. In terms of biological role, performs an essential function in the generation of cytoplasmic iron-sulfur proteins by mediating the ATP-dependent export of Fe/S cluster precursors synthesized by NFS1 and other mitochondrial proteins. Hydrolyzes ATP. Binds glutathione and may function by transporting a glutathione-conjugated iron-sulfur compound. This Yarrowia lipolytica (strain CLIB 122 / E 150) (Yeast) protein is Iron-sulfur clusters transporter ATM1, mitochondrial.